The sequence spans 212 residues: Calaxin (212 aa).

EF-hand domains are found at residues 65-100 (TDDMIMDRVFRGFDKDNDGCISVTEWVYGLSVFLRG), 101-136 (TLEEKMKYCFEVFDLNGDSFISKEEMFHMLKNSLLK), and 146-181 (GIKDLVEITLKKMDHDHDGKLSFADYEQAVREETLL). Residues D78, D80, D82, C84, E89, D114, N116, D118, E125, D159, D161, D163, K165, and D170 each contribute to the Ca(2+) site.

In terms of assembly, component of the outer dynein arm-docking complex along with ODAD1, ODAD2, ODAD3 and ODAD4. As to expression, expressed in trachea multiciliated cells.

It localises to the cytoplasm. It is found in the cytoskeleton. Its subcellular location is the cilium axoneme. The protein localises to the cell projection. The protein resides in the cilium. It localises to the flagellum. In terms of biological role, component of the outer dynein arm-docking complex (ODA-DC) that mediates outer dynein arms (ODA) binding onto the doublet microtubule. Seems to regulate the assembly of both ODAs and their axonemal docking complex onto ciliary microtubules. Regulates ciliary and flagellar motility and is required for cilia-driven determination of body laterality. The sequence is that of Calaxin (CLXN) from Bos taurus (Bovine).